Here is a 270-residue protein sequence, read N- to C-terminus: MPWKAIGIFDSGVGGLTVLKEIIKALPQEDTIYFGDTARVPYGTKSPETVTRYSLEIASFLVHRDIKLLVVACNTASACALEALQQTLSIPVVGVIEPGARRAAAVTRSGRVGVIGTEGTIRSSAYAKAIKRINPEVEVVTRACPLFVPLAEEGWTDNEVAHLTARTYLSGLREAGVDTLVLGCTHYPLLKRVIGETIGEEVKLVDSAEETARIVAEILRGGELLRPTSEQGNHHYFVSDVPAGFIRVGNRFLGGKLGDVYQVSLEAEKE.

Substrate-binding positions include 10–11 (DS) and 42–43 (YG). The active-site Proton donor/acceptor is the C73. 74-75 (NT) provides a ligand contact to substrate. Catalysis depends on C184, which acts as the Proton donor/acceptor. Residue 185–186 (TH) participates in substrate binding.

This sequence belongs to the aspartate/glutamate racemases family.

It carries out the reaction L-glutamate = D-glutamate. Its pathway is cell wall biogenesis; peptidoglycan biosynthesis. Functionally, provides the (R)-glutamate required for cell wall biosynthesis. The sequence is that of Glutamate racemase from Geobacter metallireducens (strain ATCC 53774 / DSM 7210 / GS-15).